We begin with the raw amino-acid sequence, 476 residues long: Light-independent protochlorophyllide reductase subunit N (476 aa).

[4Fe-4S] cluster-binding residues include Cys31, Cys56, and Cys116.

Belongs to the BchN/ChlN family. As to quaternary structure, protochlorophyllide reductase is composed of three subunits; ChlL, ChlN and ChlB. Forms a heterotetramer of two ChlB and two ChlN subunits. The cofactor is [4Fe-4S] cluster.

The protein resides in the plastid. It localises to the chloroplast. The catalysed reaction is chlorophyllide a + oxidized 2[4Fe-4S]-[ferredoxin] + 2 ADP + 2 phosphate = protochlorophyllide a + reduced 2[4Fe-4S]-[ferredoxin] + 2 ATP + 2 H2O. It functions in the pathway porphyrin-containing compound metabolism; chlorophyll biosynthesis (light-independent). Its function is as follows. Component of the dark-operative protochlorophyllide reductase (DPOR) that uses Mg-ATP and reduced ferredoxin to reduce ring D of protochlorophyllide (Pchlide) to form chlorophyllide a (Chlide). This reaction is light-independent. The NB-protein (ChlN-ChlB) is the catalytic component of the complex. This Staurastrum punctulatum (Green alga) protein is Light-independent protochlorophyllide reductase subunit N.